A 229-amino-acid polypeptide reads, in one-letter code: MLVNALQEKLGYIFNRYDLLLQALTHRSSSNQHNERLEFLGDAILNYVIANLLYHRFPHISEGGMSRMRANLVRENTLATLAREFNLGDYLQLGQGELKSGGYQRESILANTIEALIGGIFLDSNIQTIEILIINWYKIRIDHMDPYASYDTQKDPKTRLQEYMQRRRLPLPVYWINQIIGEAHNQIFTINCQVSELTQPIIGCGSSRRRAEQNAAAKVLEALEHNQNI.

The region spanning 3–125 (VNALQEKLGY…LIGGIFLDSN (123 aa)) is the RNase III domain. Residue Glu-38 coordinates Mg(2+). The active site involves Asp-42. Mg(2+)-binding residues include Asn-111 and Glu-114. Glu-114 is an active-site residue. The DRBM domain maps to 155-225 (DPKTRLQEYM…AAKVLEALEH (71 aa)).

The protein belongs to the ribonuclease III family. As to quaternary structure, homodimer. The cofactor is Mg(2+).

It is found in the cytoplasm. The catalysed reaction is Endonucleolytic cleavage to 5'-phosphomonoester.. Functionally, digests double-stranded RNA. Involved in the processing of primary rRNA transcript to yield the immediate precursors to the large and small rRNAs (23S and 16S). Processes some mRNAs, and tRNAs when they are encoded in the rRNA operon. Processes pre-crRNA and tracrRNA of type II CRISPR loci if present in the organism. This is Ribonuclease 3 from Blochmanniella pennsylvanica (strain BPEN).